Consider the following 176-residue polypeptide: NAD(P)H-quinone oxidoreductase subunit 6, chloroplastic (176 aa).

Transmembrane regions (helical) follow at residues 10 to 30 (FLLVFLGLGLILGGIGVVLLT), 32 to 52 (PIYSAFSLGLVLVCISLLYIL), 61 to 81 (AQLLIYVGAINVLIIFAVMFM), 92 to 112 (LWTVGNGFTLLICTSIFGLLI), and 152 to 172 (FFLPFEFISIILLAALIGAIT).

It belongs to the complex I subunit 6 family. NDH is composed of at least 16 different subunits, 5 of which are encoded in the nucleus.

It is found in the plastid. Its subcellular location is the chloroplast thylakoid membrane. The catalysed reaction is a plastoquinone + NADH + (n+1) H(+)(in) = a plastoquinol + NAD(+) + n H(+)(out). It carries out the reaction a plastoquinone + NADPH + (n+1) H(+)(in) = a plastoquinol + NADP(+) + n H(+)(out). NDH shuttles electrons from NAD(P)H:plastoquinone, via FMN and iron-sulfur (Fe-S) centers, to quinones in the photosynthetic chain and possibly in a chloroplast respiratory chain. The immediate electron acceptor for the enzyme in this species is believed to be plastoquinone. Couples the redox reaction to proton translocation, and thus conserves the redox energy in a proton gradient. The protein is NAD(P)H-quinone oxidoreductase subunit 6, chloroplastic (ndhG) of Morus indica (Mulberry).